Reading from the N-terminus, the 432-residue chain is Putative D-alanyl-D-alanine carboxypeptidase (432 aa).

A helical; Signal-anchor membrane pass occupies residues 7-25 (ATVLLTFSLSAFAVEYPVL).

It belongs to the peptidase S12 family. YfeW subfamily.

The protein localises to the cell inner membrane. It catalyses the reaction Preferential cleavage: (Ac)2-L-Lys-D-Ala-|-D-Ala. Also transpeptidation of peptidyl-alanyl moieties that are N-acyl substituents of D-alanine.. This Salmonella typhi protein is Putative D-alanyl-D-alanine carboxypeptidase.